The chain runs to 106 residues: Toxin-like structure LSTX-D8 (106 aa).

The signal sequence occupies residues Met1–Ser20. The propeptide occupies Glu21–Arg41. 4 cysteine pairs are disulfide-bonded: Cys45–Cys60, Cys52–Cys69, Cys59–Cys85, and Cys71–Cys83.

Belongs to the neurotoxin 19 (CSTX) family. 02 (D7) subfamily. Expressed by the venom gland.

It is found in the secreted. The polypeptide is Toxin-like structure LSTX-D8 (Lycosa singoriensis (Wolf spider)).